We begin with the raw amino-acid sequence, 391 residues long: Nicotinate phosphoribosyltransferase (391 aa).

Histidine 216 is modified (phosphohistidine; by autocatalysis).

It belongs to the NAPRTase family. In terms of processing, transiently phosphorylated on a His residue during the reaction cycle. Phosphorylation strongly increases the affinity for substrates and increases the rate of nicotinate D-ribonucleotide production. Dephosphorylation regenerates the low-affinity form of the enzyme, leading to product release.

The catalysed reaction is nicotinate + 5-phospho-alpha-D-ribose 1-diphosphate + ATP + H2O = nicotinate beta-D-ribonucleotide + ADP + phosphate + diphosphate. Its pathway is cofactor biosynthesis; NAD(+) biosynthesis; nicotinate D-ribonucleotide from nicotinate: step 1/1. Functionally, catalyzes the synthesis of beta-nicotinate D-ribonucleotide from nicotinate and 5-phospho-D-ribose 1-phosphate at the expense of ATP. In Bordetella petrii (strain ATCC BAA-461 / DSM 12804 / CCUG 43448), this protein is Nicotinate phosphoribosyltransferase.